A 525-amino-acid chain; its full sequence is GMP synthase [glutamine-hydrolyzing] (525 aa).

Positions 13-202 (TILVLDFGSQ…AVEICQAAQT (190 aa)) constitute a Glutamine amidotransferase type-1 domain. Cys89 (nucleophile) is an active-site residue. Catalysis depends on residues His176 and Glu178. The GMPS ATP-PPase domain maps to 203-400 (WTMENFIDTE…LGISHELVWR (198 aa)). An ATP-binding site is contributed by 231-237 (SGGVDST). Residues Arg304, Asp462, Lys517, and Glu523 each coordinate XMP.

As to quaternary structure, homodimer. It depends on Mg(2+) as a cofactor.

The protein resides in the cytoplasm. The protein localises to the cytosol. It carries out the reaction XMP + L-glutamine + ATP + H2O = GMP + L-glutamate + AMP + diphosphate + 2 H(+). Its pathway is purine metabolism; GMP biosynthesis; GMP from XMP (L-Gln route): step 1/1. Functionally, catalyzes the conversion of xanthine monophosphate (XMP) to GMP in the presence of glutamine and ATP through an adenyl-XMP intermediate. This Eremothecium gossypii (strain ATCC 10895 / CBS 109.51 / FGSC 9923 / NRRL Y-1056) (Yeast) protein is GMP synthase [glutamine-hydrolyzing] (GUA1).